A 297-amino-acid chain; its full sequence is Probable ABC transporter phosphite binding protein PhnD1 (297 aa).

The signal sequence occupies residues 1 to 24 (MFNLKYFLVSSSLLFSVFSSPVFS).

This sequence belongs to the phosphate/phosphite/phosphonate binding protein family. As to quaternary structure, the complex may be composed of two ATP-binding proteins (PhnC1), two transmembrane proteins (PhnE1) and a solute-binding protein (PhnD1).

Its subcellular location is the periplasm. Functionally, probably part of the ABC transporter complex PhnD1C1E1. Binds strongly to inorganic phosphite and with very weak affinities to methylphosphonate (MPn) and phosphate. This is Probable ABC transporter phosphite binding protein PhnD1 from Prochlorococcus marinus (strain MIT 9301).